A 382-amino-acid chain; its full sequence is Galactokinase (382 aa).

Residue 34 to 37 (EHTD) participates in substrate binding. 124-130 (GAGLSSS) contacts ATP. Mg(2+) contacts are provided by Ser-130 and Glu-162. Asp-174 functions as the Proton acceptor in the catalytic mechanism. Tyr-223 serves as a coordination point for substrate.

This sequence belongs to the GHMP kinase family. GalK subfamily.

The protein localises to the cytoplasm. The catalysed reaction is alpha-D-galactose + ATP = alpha-D-galactose 1-phosphate + ADP + H(+). It functions in the pathway carbohydrate metabolism; galactose metabolism. Its function is as follows. Catalyzes the transfer of the gamma-phosphate of ATP to D-galactose to form alpha-D-galactose-1-phosphate (Gal-1-P). This chain is Galactokinase, found in Salmonella agona (strain SL483).